Here is a 174-residue protein sequence, read N- to C-terminus: Adenine phosphoribosyltransferase (174 aa).

This sequence belongs to the purine/pyrimidine phosphoribosyltransferase family. Homodimer.

The protein resides in the cytoplasm. It catalyses the reaction AMP + diphosphate = 5-phospho-alpha-D-ribose 1-diphosphate + adenine. Its pathway is purine metabolism; AMP biosynthesis via salvage pathway; AMP from adenine: step 1/1. Functionally, catalyzes a salvage reaction resulting in the formation of AMP, that is energically less costly than de novo synthesis. The chain is Adenine phosphoribosyltransferase from Lachnoclostridium phytofermentans (strain ATCC 700394 / DSM 18823 / ISDg) (Clostridium phytofermentans).